The following is a 512-amino-acid chain: ATP synthase subunit alpha (512 aa).

Position 169 to 176 (169 to 176 (GDRQTGKT)) interacts with ATP.

This sequence belongs to the ATPase alpha/beta chains family. F-type ATPases have 2 components, CF(1) - the catalytic core - and CF(0) - the membrane proton channel. CF(1) has five subunits: alpha(3), beta(3), gamma(1), delta(1), epsilon(1). CF(0) has three main subunits: a(1), b(2) and c(9-12). The alpha and beta chains form an alternating ring which encloses part of the gamma chain. CF(1) is attached to CF(0) by a central stalk formed by the gamma and epsilon chains, while a peripheral stalk is formed by the delta and b chains.

The protein resides in the cell inner membrane. It carries out the reaction ATP + H2O + 4 H(+)(in) = ADP + phosphate + 5 H(+)(out). Its function is as follows. Produces ATP from ADP in the presence of a proton gradient across the membrane. The alpha chain is a regulatory subunit. This Leptothrix cholodnii (strain ATCC 51168 / LMG 8142 / SP-6) (Leptothrix discophora (strain SP-6)) protein is ATP synthase subunit alpha.